A 218-amino-acid polypeptide reads, in one-letter code: LOB domain-containing protein 29 (218 aa).

The LOB domain occupies 10-112 (SPCGACKFLR…AELEILKQQA (103 aa)).

It belongs to the LOB domain-containing protein family. As to expression, expressed in roots.

Involved in lateral root formation. Regulated by the transcriptional activators ARF7 and ARF19. This chain is LOB domain-containing protein 29 (LBD29), found in Arabidopsis thaliana (Mouse-ear cress).